Reading from the N-terminus, the 1002-residue chain is Lon protease homolog, mitochondrial (1002 aa).

A Lon N-terminal domain is found at 102 to 313; the sequence is VIALPLPHRP…LTLELVKKEM (212 aa). 468 to 475 contacts ATP; sequence GPPGVGKT. One can recognise a Lon proteolytic domain in the interval 811–995; it reads QTPVGVVMGL…NEIFDIAFQS (185 aa). Catalysis depends on residues S901 and K944.

Belongs to the peptidase S16 family. In terms of assembly, homohexamer or homoheptamer. Organized in a ring with a central cavity.

Its subcellular location is the mitochondrion matrix. It catalyses the reaction Hydrolysis of proteins in presence of ATP.. Its function is as follows. ATP-dependent serine protease that mediates the selective degradation of misfolded, unassembled or oxidatively damaged polypeptides as well as certain short-lived regulatory proteins in the mitochondrial matrix. May also have a chaperone function in the assembly of inner membrane protein complexes. Participates in the regulation of mitochondrial gene expression and in the maintenance of the integrity of the mitochondrial genome. Binds to mitochondrial DNA in a site-specific manner. In Oryza sativa subsp. japonica (Rice), this protein is Lon protease homolog, mitochondrial.